A 236-amino-acid chain; its full sequence is Small ribosomal subunit protein uS2c (236 aa).

This sequence belongs to the universal ribosomal protein uS2 family.

It is found in the plastid. The protein localises to the chloroplast. The polypeptide is Small ribosomal subunit protein uS2c (rps2) (Phalaenopsis aphrodite subsp. formosana (Moth orchid)).